The sequence spans 491 residues: Acetyl-coenzyme A carboxylase carboxyl transferase subunit beta, chloroplastic (491 aa).

Positions 28–56 (LGPIENTSESEDPNRNDMKKNSHSWGSRD) are disordered. The 269-residue stretch at 223-491 (LWVQCENCYG…FPLNKNSIEH (269 aa)) folds into the CoA carboxyltransferase N-terminal domain. Positions 227, 230, 246, and 249 each coordinate Zn(2+). The segment at 227 to 249 (CENCYGLNYKKILKSKMNLCEQC) adopts a C4-type zinc-finger fold.

The protein belongs to the AccD/PCCB family. Acetyl-CoA carboxylase is a heterohexamer composed of biotin carboxyl carrier protein, biotin carboxylase and 2 subunits each of ACCase subunit alpha and ACCase plastid-coded subunit beta (accD). Zn(2+) is required as a cofactor.

The protein resides in the plastid. It localises to the chloroplast stroma. The enzyme catalyses N(6)-carboxybiotinyl-L-lysyl-[protein] + acetyl-CoA = N(6)-biotinyl-L-lysyl-[protein] + malonyl-CoA. It participates in lipid metabolism; malonyl-CoA biosynthesis; malonyl-CoA from acetyl-CoA: step 1/1. Functionally, component of the acetyl coenzyme A carboxylase (ACC) complex. Biotin carboxylase (BC) catalyzes the carboxylation of biotin on its carrier protein (BCCP) and then the CO(2) group is transferred by the transcarboxylase to acetyl-CoA to form malonyl-CoA. This Daucus carota (Wild carrot) protein is Acetyl-coenzyme A carboxylase carboxyl transferase subunit beta, chloroplastic.